We begin with the raw amino-acid sequence, 384 residues long: Acetylornithine aminotransferase (384 aa).

Pyridoxal 5'-phosphate is bound by residues 95-96 and Phe-122; that span reads GA. Arg-125 contributes to the N(2)-acetyl-L-ornithine binding site. A pyridoxal 5'-phosphate-binding site is contributed by 207 to 210; the sequence is DEIQ. Position 236 is an N6-(pyridoxal phosphate)lysine (Lys-236). Ser-264 lines the N(2)-acetyl-L-ornithine pocket. Pyridoxal 5'-phosphate is bound at residue Thr-265.

It belongs to the class-III pyridoxal-phosphate-dependent aminotransferase family. ArgD subfamily. As to quaternary structure, homodimer. It depends on pyridoxal 5'-phosphate as a cofactor.

It is found in the cytoplasm. It catalyses the reaction N(2)-acetyl-L-ornithine + 2-oxoglutarate = N-acetyl-L-glutamate 5-semialdehyde + L-glutamate. Its pathway is amino-acid biosynthesis; L-arginine biosynthesis; N(2)-acetyl-L-ornithine from L-glutamate: step 4/4. The sequence is that of Acetylornithine aminotransferase from Halalkalibacterium halodurans (strain ATCC BAA-125 / DSM 18197 / FERM 7344 / JCM 9153 / C-125) (Bacillus halodurans).